The following is an 88-amino-acid chain: MPKPDIHPTWYPDAKVICNGEVVMTTGSTQPEINVDVWSGNHPFFTGTQKILDTEGRVDRFMRKYGMGSVDNATSEKKSATDETSKES.

The segment at 67–88 (MGSVDNATSEKKSATDETSKES) is disordered. Basic and acidic residues predominate over residues 74–88 (TSEKKSATDETSKES).

It belongs to the bacterial ribosomal protein bL31 family. Type A subfamily. As to quaternary structure, part of the 50S ribosomal subunit.

Its function is as follows. Binds the 23S rRNA. In Synechococcus sp. (strain CC9311), this protein is Large ribosomal subunit protein bL31.